Consider the following 353-residue polypeptide: Photosystem II D2 protein (353 aa).

Threonine 2 carries the N-acetylthreonine modification. Threonine 2 bears the Phosphothreonine mark. Residues 41–61 (CAYFAVGGWFTGTTFVTSWYT) traverse the membrane as a helical segment. Histidine 118 contributes to the chlorophyll a binding site. Residues 125-141 (GFMLRQFELARSVQLRP) form a helical membrane-spanning segment. 2 residues coordinate pheophytin a: glutamine 130 and asparagine 143. Residues 153–166 (VFVSVFLIYPLGQS) form a helical membrane-spanning segment. Residue histidine 198 coordinates chlorophyll a. A helical membrane pass occupies residues 208–228 (AALLCAIHGATVENTLFEDGD). Residues histidine 215 and phenylalanine 262 each coordinate a plastoquinone. Fe cation is bound at residue histidine 215. Fe cation is bound at residue histidine 269. A helical transmembrane segment spans residues 279–295 (GLWMSALGVVGLALNLR).

The protein belongs to the reaction center PufL/M/PsbA/D family. As to quaternary structure, PSII is composed of 1 copy each of membrane proteins PsbA, PsbB, PsbC, PsbD, PsbE, PsbF, PsbH, PsbI, PsbJ, PsbK, PsbL, PsbM, PsbT, PsbX, PsbY, PsbZ, Psb30/Ycf12, at least 3 peripheral proteins of the oxygen-evolving complex and a large number of cofactors. It forms dimeric complexes. The D1/D2 heterodimer binds P680, chlorophylls that are the primary electron donor of PSII, and subsequent electron acceptors. It shares a non-heme iron and each subunit binds pheophytin, quinone, additional chlorophylls, carotenoids and lipids. There is also a Cl(-1) ion associated with D1 and D2, which is required for oxygen evolution. The PSII complex binds additional chlorophylls, carotenoids and specific lipids. is required as a cofactor.

It is found in the plastid. The protein resides in the chloroplast thylakoid membrane. The enzyme catalyses 2 a plastoquinone + 4 hnu + 2 H2O = 2 a plastoquinol + O2. Photosystem II (PSII) is a light-driven water:plastoquinone oxidoreductase that uses light energy to abstract electrons from H(2)O, generating O(2) and a proton gradient subsequently used for ATP formation. It consists of a core antenna complex that captures photons, and an electron transfer chain that converts photonic excitation into a charge separation. The D1/D2 (PsbA/PsbD) reaction center heterodimer binds P680, the primary electron donor of PSII as well as several subsequent electron acceptors. D2 is needed for assembly of a stable PSII complex. The sequence is that of Photosystem II D2 protein from Ipomoea purpurea (Common morning glory).